A 210-amino-acid polypeptide reads, in one-letter code: Large ribosomal subunit protein uL4 (210 aa).

The span at 41 to 51 (ANARQGTQSTK) shows a compositional bias: polar residues. 2 disordered regions span residues 41-60 (ANARQGTQSTKTRGEVQGSS) and 67-98 (KGTGNARMGTNRSPVRRHGGVAFGPRPRDFSK).

The protein belongs to the universal ribosomal protein uL4 family. In terms of assembly, part of the 50S ribosomal subunit.

Its function is as follows. One of the primary rRNA binding proteins, this protein initially binds near the 5'-end of the 23S rRNA. It is important during the early stages of 50S assembly. It makes multiple contacts with different domains of the 23S rRNA in the assembled 50S subunit and ribosome. Forms part of the polypeptide exit tunnel. In Dehalococcoides mccartyi (strain ATCC BAA-2100 / JCM 16839 / KCTC 5957 / BAV1), this protein is Large ribosomal subunit protein uL4.